We begin with the raw amino-acid sequence, 88 residues long: Small ribosomal subunit protein uS15 (88 aa).

It belongs to the universal ribosomal protein uS15 family. In terms of assembly, part of the 30S ribosomal subunit. Forms a bridge to the 50S subunit in the 70S ribosome, contacting the 23S rRNA.

Its function is as follows. One of the primary rRNA binding proteins, it binds directly to 16S rRNA where it helps nucleate assembly of the platform of the 30S subunit by binding and bridging several RNA helices of the 16S rRNA. In terms of biological role, forms an intersubunit bridge (bridge B4) with the 23S rRNA of the 50S subunit in the ribosome. In Finegoldia magna (strain ATCC 29328 / DSM 20472 / WAL 2508) (Peptostreptococcus magnus), this protein is Small ribosomal subunit protein uS15.